A 295-amino-acid polypeptide reads, in one-letter code: Indole-3-glycerol phosphate synthase (295 aa).

The protein belongs to the TrpC family.

It carries out the reaction 1-(2-carboxyphenylamino)-1-deoxy-D-ribulose 5-phosphate + H(+) = (1S,2R)-1-C-(indol-3-yl)glycerol 3-phosphate + CO2 + H2O. The protein operates within amino-acid biosynthesis; L-tryptophan biosynthesis; L-tryptophan from chorismate: step 4/5. The protein is Indole-3-glycerol phosphate synthase of Synechococcus sp. (strain ATCC 27144 / PCC 6301 / SAUG 1402/1) (Anacystis nidulans).